The sequence spans 261 residues: Triosephosphate isomerase (261 aa).

10 to 12 (NWK) is a binding site for substrate. Histidine 100 (electrophile) is an active-site residue. Glutamate 172 functions as the Proton acceptor in the catalytic mechanism. Substrate-binding positions include glycine 178, serine 218, and 239–240 (GG).

The protein belongs to the triosephosphate isomerase family. Homodimer.

It is found in the cytoplasm. The catalysed reaction is D-glyceraldehyde 3-phosphate = dihydroxyacetone phosphate. The protein operates within carbohydrate biosynthesis; gluconeogenesis. It functions in the pathway carbohydrate degradation; glycolysis; D-glyceraldehyde 3-phosphate from glycerone phosphate: step 1/1. Its function is as follows. Involved in the gluconeogenesis. Catalyzes stereospecifically the conversion of dihydroxyacetone phosphate (DHAP) to D-glyceraldehyde-3-phosphate (G3P). This chain is Triosephosphate isomerase, found in Mycobacterium sp. (strain JLS).